The chain runs to 643 residues: Threonine--tRNA ligase (643 aa).

A TGS domain is found at 1-61 (MPTIKFIDGT…TNDSIVKFVY (61 aa)). Positions 244 to 535 (DHRKISKILD…LIEEYIGNFP (292 aa)) are catalytic. Positions 335, 386, and 512 each coordinate Zn(2+).

This sequence belongs to the class-II aminoacyl-tRNA synthetase family. In terms of assembly, homodimer. Zn(2+) serves as cofactor.

It is found in the cytoplasm. It catalyses the reaction tRNA(Thr) + L-threonine + ATP = L-threonyl-tRNA(Thr) + AMP + diphosphate + H(+). In terms of biological role, catalyzes the attachment of threonine to tRNA(Thr) in a two-step reaction: L-threonine is first activated by ATP to form Thr-AMP and then transferred to the acceptor end of tRNA(Thr). Also edits incorrectly charged L-seryl-tRNA(Thr). This Buchnera aphidicola subsp. Baizongia pistaciae (strain Bp) protein is Threonine--tRNA ligase.